Consider the following 565-residue polypeptide: MEDSDSAAKQLGLAEAAAVAAAAAVAAAAAAAAESEAEEPVLSRDEDSEEDADSEAERETRRVTAVAVMAAESGHMDMGTEALPSPDEAAAAAAFAEVTTVTVANVGSSADNVFTTSVANAASISGHVLSGRTALQIGDSLNTEKATLIVVHTDGSIVETTGLKGPAAPLTPGPQSPPTPLAPGQEKGGTKYNWDPSVYDSELPVRCRNISGTLYKSRLGSGGRGRCIKQGENWYSPTEFEAMAGRASSKDWKRSIRYAGRPLQCLIQDGILNPHAASCTCAACCDDMTLSGPVRLFVPYKRRKKENELPTTPVKKDSPKNITLLPATAATTFTVTPSGQITTSGALTFDRASTVEATAVISESPAQGDVFAGATVQEAGVQPPCRVGHPEPHYPGYQDSCQIAPFPEAALPTSHPKIVLTSLPALAVPPSTPTKAVSPTVVSGLEMSEHRSWLYLEEMVNSLLNTAQQLKTLFEQAKQASSCREAAVTQARMQVDAERKEQSCVNCGREAMSECTGCHKVNYCSTFCQRKDWKDHQHVCGQSASVTVQADDVHVEESVIEKVAV.

Disordered stretches follow at residues 29–62 (AAAA…ETRR) and 162–189 (GLKG…EKGG). The segment covering 169–181 (PLTPGPQSPPTPL) has biased composition (pro residues). Thr-171 bears the Phosphothreonine mark. Ser-176 is modified (phosphoserine). Thr-179 carries the phosphothreonine modification. The 81-residue stretch at 193-273 (NWDPSVYDSE…QCLIQDGILN (81 aa)) folds into the SAND domain. Residues 301 to 316 (KRRKKENELPTTPVKK) carry the Nuclear localization signal motif. An interaction with LMO4 region spans residues 403 to 478 (IAPFPEAALP…QLKTLFEQAK (76 aa)). Thr-432 is modified (phosphothreonine). Phosphoserine is present on residues Ser-443 and Ser-448. Zn(2+) is bound by residues Cys-504, Cys-507, Cys-515, Cys-518, Cys-524, Cys-528, His-536, and Cys-540. Residues 504-540 (CVNCGREAMSECTGCHKVNYCSTFCQRKDWKDHQHVC) form an MYND-type zinc finger.

Homodimer. Interacts with LMO4; LMO4 blocks export from nucleus. Interacts with LMO2 and CLIM2. May interact with the corepressors NCOR1 and NCRO2. Identified in a complex with XRCC5 and XRCC6. Interacts (via the SAND domain) with the DNA-PK complex subunit XRCC6; the interaction is direct and may be inhibited by DNA-binding. In terms of processing, may be phosphorylated by DNA-PK complex in a DNA independent manner (in vitro). In terms of tissue distribution, ubiquitous. Detected in brain, spleen, adrenal, lung, skeletal muscle, liver, kidney, and in developing germ cells in testis. In pituitary, restricted to hormone-secreting cell types.

The protein localises to the nucleus. It is found in the secreted. In terms of biological role, transcription factor that binds to sequence with multiple copies of 5'-TTC[CG]G-3' present in its own promoter and that of the HNRPA2B1 gene. Down-regulates transcription of these genes. Binds to the retinoic acid response element (RARE) 5'-AGGGTTCACCGAAAGTTCA-3'. Activates the proenkephalin gene independently of promoter binding, probably through protein-protein interaction. When secreted, behaves as an inhibitor of cell proliferation, by arresting cells in the G0 or G1 phase. Regulates epithelial cell proliferation and side-branching in the mammary gland. Required for neural tube closure and skeletal patterning. Controls the expression of peripheral tissue antigens in pancreatic lymph nodes. Transcriptional activator of EIF4G3. May also involved in behavior. The sequence is that of Deformed epidermal autoregulatory factor 1 homolog (Deaf1) from Rattus norvegicus (Rat).